We begin with the raw amino-acid sequence, 178 residues long: MSSRAEELILSLAKDLVGEDATELLKFLLRKRIEMTDDDIAKELNVKVNEIRKKLYLLSEQGFITYRKTRDKETGLFIYYWKVNIDQINELLLNRKRLVLEKLKARYEQEKDSLYYYCPQDNIQYNFDEALENEFKCPKCGSPLEYYDSEKTKKFLEYKIKQIENEIERETRHGSNSR.

The HTH TFE/IIEalpha-type domain maps to 5 to 89 (AEELILSLAK…YWKVNIDQIN (85 aa)).

The protein belongs to the TFE family. In terms of assembly, monomer. Interaction with RNA polymerase subunits RpoF and RpoE is necessary for Tfe stimulatory transcription activity. Able to interact with Tbp and RNA polymerase in the absence of DNA promoter. Interacts both with the preinitiation and elongation complexes.

Functionally, transcription factor that plays a role in the activation of archaeal genes transcribed by RNA polymerase. Facilitates transcription initiation by enhancing TATA-box recognition by TATA-box-binding protein (Tbp), and transcription factor B (Tfb) and RNA polymerase recruitment. Not absolutely required for transcription in vitro, but particularly important in cases where Tbp or Tfb function is not optimal. It dynamically alters the nucleic acid-binding properties of RNA polymerases by stabilizing the initiation complex and destabilizing elongation complexes. Seems to translocate with the RNA polymerase following initiation and acts by binding to the non template strand of the transcription bubble in elongation complexes. This is Transcription factor E from Sulfurisphaera tokodaii (strain DSM 16993 / JCM 10545 / NBRC 100140 / 7) (Sulfolobus tokodaii).